The following is a 123-amino-acid chain: Small ribosomal subunit protein bS16 (123 aa).

The disordered stretch occupies residues 86–123 (PVRAEQTKQPQPKAKAQQRAKDQAERDAAAAAEAAAGE). A compositionally biased stretch (low complexity) spans 93–102 (KQPQPKAKAQ). Over residues 104–113 (RAKDQAERDA) the composition is skewed to basic and acidic residues. Residues 114–123 (AAAAEAAAGE) show a composition bias toward low complexity.

The protein belongs to the bacterial ribosomal protein bS16 family.

This Paramagnetospirillum magneticum (strain ATCC 700264 / AMB-1) (Magnetospirillum magneticum) protein is Small ribosomal subunit protein bS16.